Here is a 203-residue protein sequence, read N- to C-terminus: Large ribosomal subunit protein uL22 (203 aa).

Polar residues predominate over residues 138-167; that stretch reads PENTQSGALSQQSQAEQPQNDPENGVDSQL. The segment at 138 to 203 is disordered; that stretch reads PENTQSGALS…TVLAQEKEVK (66 aa). The span at 168-177 shows a compositional bias: low complexity; it reads SAKTNSTTTA. Polar residues predominate over residues 183-196; the sequence is ADNSTKNDATNTVL.

The protein belongs to the universal ribosomal protein uL22 family. As to quaternary structure, part of the 50S ribosomal subunit.

Functionally, this protein binds specifically to 23S rRNA; its binding is stimulated by other ribosomal proteins, e.g. L4, L17, and L20. It is important during the early stages of 50S assembly. It makes multiple contacts with different domains of the 23S rRNA in the assembled 50S subunit and ribosome. Its function is as follows. The globular domain of the protein is located near the polypeptide exit tunnel on the outside of the subunit, while an extended beta-hairpin is found that lines the wall of the exit tunnel in the center of the 70S ribosome. The polypeptide is Large ribosomal subunit protein uL22 (Mesomycoplasma hyopneumoniae (strain 7448) (Mycoplasma hyopneumoniae)).